Here is a 1165-residue protein sequence, read N- to C-terminus: MTVSTHHDDSPGLSGRLRDLLHHVFGNQKSPTVYPNAPGNSAKPVPTGLADDIDKLGFKDIDTLLIFLNSAVKGVNDDQQFLLEKMIQLLAKLPPASREGKKLTDGLINDLWDSLDHPPVASLGKGFSFREPDGSNNNIHLPSLGAANTPYARSTKPLVFQNPNPPDPATIFDTLMVRDPAKFRPHPNKISSMLFYLATIITHDIFQTSPRDFNINLTSSYLDLSPLYGRNHDEQMAVRTGKDGLLKPDTFSSKRVIGFPPGVGAFLIMFNRFHNYVVTQLAKINEGGRFKRPTTPDDTAGWETYDNSLFQTGRLITCGLYINIVLGDYVRTILNLNRANTTWNLDPRTKEGKSLLSKPTPEAVGNQVSVEFNLIYRWHCTISERDDKWTTNAMREALGGQDPATAKMEDVMRALGMFEKNIPDEPEKRTLAGLTRQSDGAFDDTELVKILQESIEDVAGAFGPNHVPACMRAIEILGIKQSRTWNVATLNEFRQFIGLTPHDSFYHMNPDPKICKILAQMYDSPDAVELYPGIMAEAAKPPFSPGSGLCPPYTTSRAILSDAVSLVRGDRFYTVDYTPRNITNWGFNEASTDKAVDWGHVIYKLFFRAFPNHFLPNSVYAHFPFVVPSENKLIFEGLGAANKYSWDPPKARAPIQFIRSHKAVLEVLSNQKDYKVTWGPAIKMLSGDPATSFALAGDEPANAASRHHVIAALTAPKQWRDEVRRFYEVTTRDLLRRHGAPVHGVGAGPRTHEVDVIRDVIGLAHARFMASLFSLPLKEEGKEEGAYGEHELYRSLVTIFAAIFWDSDVCNSLKLHQASKAAADKMSALIAEHVREMEAGTGFLGALGKLKDLITGNDVHANGNGVYTNGNGVYTNGNGVHTNGNGVHTNGNGVPHAAPSLRSFGDQLLQRMLSQDGRSIEETVSGTILPVVMAGTANQTQLLAQCLDYYLGVGEKHLPEMKRLAMLNTSEADEKLLKYTMEGCRIRGCVALYRAVVTDQAVDDTIPCIPNKDDPTFARPLSNPQVAESARTLKLSTGTRMLVDLTTASHDPAAFPDPDEVRLDRPLESYVHFGLGPHRCAGEPISQIALSSVMKVLLQLDGLRRAAGPRGEIRSYPASQWPGQAGRPPRDPAWSGLRTFTSADQSAFSPLATTMKINWEGRGDL.

The tract at residues 104–448 (TDGLINDLWD…DGAFDDTELV (345 aa)) is fatty acid alpha-dioxygenase. Residue His203 coordinates heme b. Ca(2+) contacts are provided by Asp204, Ser219, Tyr221, Asp223, and Ser225. Residue Tyr376 is part of the active site. His379 contributes to the heme b binding site. The epoxy alcohol synthase stretch occupies residues 666–1161 (EVLSNQKDYK…ATTMKINWEG (496 aa)). A heme-binding site is contributed by Cys1080. Residues 1114-1134 (RSYPASQWPGQAGRPPRDPAW) form a disordered region.

Belongs to the peroxidase family. In terms of assembly, homotetramer. Heme b serves as cofactor. The cofactor is Ca(2+). Heme is required as a cofactor. In terms of processing, the N-terminus is blocked.

It catalyses the reaction (9Z,12Z)-octadecadienoate + O2 = (8R,9Z,12Z)-8-hydroperoxyoctadeca-9,12-dienoate. The enzyme catalyses (8R,9Z,12Z)-8-hydroperoxyoctadeca-9,12-dienoate = (7S,8S,9Z,12Z)-7,8-dihydroxyoctadeca-9,12-dienoate. Its function is as follows. 7,8-linoleate diol synthase is a bifunctional enzyme that converts linoleic acid (18:2n-6) into 8-hydroperoxy-8(E),12(Z)-octadecadienoic acid (8-HPODE) and then catalyzes the isomerization of the resulting hydroperoxide to 7,8-dihydroxy-9(Z),12(Z)-octadecadienoic acid (7,8-DiHODE). The polypeptide is Linoleate diol synthase (Gaeumannomyces graminis (Turf grass take-all root rot fungus)).